Consider the following 483-residue polypeptide: MKVPRCMSTQHPDNVNPPFFAEEPELGGEDEIREAYYVFSHLGCDEQMWDCEGKEVDNYVVKKLLTKYQAFFRDHVLGEDLRLTLRVPNPTVERAEAKILLETLESIPRSYDTASLFYGMDAAPVFEVILPMTSSSSCLNRIHSYYLDFVKGKERLQLADGVTVKEWIGEFRPDEINVIPLFEDHEGMLNAAKITGEYLDGKDIQEQRVFLARSDPAMNYGMISATLLNRIALSDFRDLEEESGVKLYPIIGMGSAPFRGNLRPDNVEDVTWEYRGAYTFTVQSSFKYDHEPSDVIRGIKKLRSVKPGRAAEIERESVLEIISAYCREYRRQVMDLVDIINRVARYVPGRRKRKLHIGLFGYSRSMGNVSLPRAITFTAALYSLGVPPELLGFNALSSGDLEFIEEVYPGLGRDLHDAARYANPESPFLSPEVKSSFEEYLEPEYDEGHMKTTEEIIRALRINRTANLQELILEAASQRKFLG.

The disordered stretch occupies residues 1-20 (MKVPRCMSTQHPDNVNPPFF).

It belongs to the PEPCase type 2 family. Homotetramer. It depends on Mg(2+) as a cofactor.

The enzyme catalyses oxaloacetate + phosphate = phosphoenolpyruvate + hydrogencarbonate. With respect to regulation, inhibited by NaCl, KCl, ATP, ADP, GTP and aspartate. Unlike E.coli, not regulated by acetyl-CoA. Functionally, catalyzes the irreversible beta-carboxylation of phosphoenolpyruvate (PEP) to form oxaloacetate (OAA), a four-carbon dicarboxylic acid source for the tricarboxylic acid cycle. The sequence is that of Phosphoenolpyruvate carboxylase (ppcA) from Methanothermobacter thermautotrophicus (strain ATCC 29096 / DSM 1053 / JCM 10044 / NBRC 100330 / Delta H) (Methanobacterium thermoautotrophicum).